We begin with the raw amino-acid sequence, 775 residues long: Putative ankyrin repeat protein RBE_0801 (775 aa).

6 ANK repeats span residues 66 to 95 (HSLP…ENTE), 300 to 329 (ATTV…KVEN), 331 to 356 (ILQE…IKSF), 357 to 385 (TNDY…NIVG), 447 to 476 (IPDV…SFDF), and 523 to 552 (GDDK…KQGI).

The chain is Putative ankyrin repeat protein RBE_0801 from Rickettsia bellii (strain RML369-C).